The chain runs to 509 residues: Steroid 17-alpha-hydroxylase/17,20 lyase (509 aa).

Asparagine 202 is a substrate binding site. Cysteine 442 serves as a coordination point for heme.

Belongs to the cytochrome P450 family. The cofactor is heme.

It localises to the endoplasmic reticulum membrane. The protein resides in the microsome membrane. The enzyme catalyses a C21-steroid + reduced [NADPH--hemoprotein reductase] + O2 = a 17alpha-hydroxy-C21-steroid + oxidized [NADPH--hemoprotein reductase] + H2O + H(+). The catalysed reaction is progesterone + reduced [NADPH--hemoprotein reductase] + O2 = 17alpha-hydroxyprogesterone + oxidized [NADPH--hemoprotein reductase] + H2O + H(+). It catalyses the reaction pregnenolone + reduced [NADPH--hemoprotein reductase] + O2 = 17alpha-hydroxypregnenolone + oxidized [NADPH--hemoprotein reductase] + H2O + H(+). It carries out the reaction 17alpha-hydroxyprogesterone + reduced [NADPH--hemoprotein reductase] + O2 = androst-4-ene-3,17-dione + acetate + oxidized [NADPH--hemoprotein reductase] + H2O + 2 H(+). The enzyme catalyses 17alpha-hydroxyprogesterone + reduced [NADPH--hemoprotein reductase] + O2 = 16alpha,17alpha-dihydroxyprogesterone + oxidized [NADPH--hemoprotein reductase] + H2O + H(+). The catalysed reaction is 16alpha,17alpha-dihydroxyprogesterone + reduced [NADPH--hemoprotein reductase] + O2 = 6beta,16alpha,17alpha-trihydroxyprogesterone + oxidized [NADPH--hemoprotein reductase] + H2O + H(+). It catalyses the reaction 17alpha-hydroxypregnenolone + reduced [NADPH--hemoprotein reductase] + O2 = 3beta-hydroxyandrost-5-en-17-one + acetate + oxidized [NADPH--hemoprotein reductase] + H2O + 2 H(+). It carries out the reaction 16alpha,17alpha-dihydroxypregnenolone + reduced [NADPH--hemoprotein reductase] + O2 = 3beta,16alpha-dihydroxy-androst-5-en-17-one + acetate + oxidized [NADPH--hemoprotein reductase] + H2O + 2 H(+). The enzyme catalyses 3beta-hydroxyandrost-5-en-17-one + reduced [NADPH--hemoprotein reductase] + O2 = 3beta,16alpha-dihydroxy-androst-5-en-17-one + oxidized [NADPH--hemoprotein reductase] + H2O + H(+). The catalysed reaction is androst-4-ene-3,17-dione + reduced [NADPH--hemoprotein reductase] + O2 = 16alpha-hydroxyandrost-4-ene-3,17-dione + oxidized [NADPH--hemoprotein reductase] + H2O + H(+). It participates in steroid hormone biosynthesis. It functions in the pathway steroid biosynthesis; glucocorticoid biosynthesis. With respect to regulation, regulated predominantly by intracellular cAMP levels. The 17,20-lyase activity is stimulated by cytochrome b5, which acts as an allosteric effector increasing the Vmax of the lyase activity. Its function is as follows. A cytochrome P450 monooxygenase involved in corticoid and androgen biosynthesis. Catalyzes 17-alpha hydroxylation of C21 steroids, which is common for both pathways. A second oxidative step, required only for androgen synthesis, involves an acyl-carbon cleavage. The 17-alpha hydroxy intermediates, as part of adrenal glucocorticoids biosynthesis pathway, are precursors of cortisol. Hydroxylates steroid hormones, pregnenolone and progesterone to form 17-alpha hydroxy metabolites, followed by the cleavage of the C17-C20 bond to form C19 steroids, dehydroepiandrosterone (DHEA) and androstenedione. Has 16-alpha hydroxylase activity. Catalyzes 16-alpha hydroxylation of 17-alpha hydroxy pregnenolone, followed by the cleavage of the C17-C20 bond to form 16-alpha-hydroxy DHEA. Also 16-alpha hydroxylates androgens, relevant for estriol synthesis. Mechanistically, uses molecular oxygen inserting one oxygen atom into a substrate, and reducing the second into a water molecule, with two electrons provided by NADPH via cytochrome P450 reductase (CPR; NADPH-ferrihemoprotein reductase). In Sus scrofa (Pig), this protein is Steroid 17-alpha-hydroxylase/17,20 lyase (CYP17A1).